The chain runs to 162 residues: ATP synthase subunit b (162 aa).

The chain crosses the membrane as a helical span at residues 6 to 26 (PDIGLLFWMLLSFGIVFFVAA).

The protein belongs to the ATPase B chain family. As to quaternary structure, F-type ATPases have 2 components, F(1) - the catalytic core - and F(0) - the membrane proton channel. F(1) has five subunits: alpha(3), beta(3), gamma(1), delta(1), epsilon(1). F(0) has three main subunits: a(1), b(2) and c(10-14). The alpha and beta chains form an alternating ring which encloses part of the gamma chain. F(1) is attached to F(0) by a central stalk formed by the gamma and epsilon chains, while a peripheral stalk is formed by the delta and b chains.

The protein localises to the cell inner membrane. Functionally, f(1)F(0) ATP synthase produces ATP from ADP in the presence of a proton or sodium gradient. F-type ATPases consist of two structural domains, F(1) containing the extramembraneous catalytic core and F(0) containing the membrane proton channel, linked together by a central stalk and a peripheral stalk. During catalysis, ATP synthesis in the catalytic domain of F(1) is coupled via a rotary mechanism of the central stalk subunits to proton translocation. Its function is as follows. Component of the F(0) channel, it forms part of the peripheral stalk, linking F(1) to F(0). The chain is ATP synthase subunit b from Azobacteroides pseudotrichonymphae genomovar. CFP2.